The following is a 967-amino-acid chain: Leucine--tRNA ligase (967 aa).

Positions 43–53 (PYLSGHLHVGH) match the 'HIGH' region motif. The short motif at 650–654 (KMSKS) is the 'KMSKS' region element. Lys-653 is an ATP binding site.

Belongs to the class-I aminoacyl-tRNA synthetase family.

The protein localises to the cytoplasm. The catalysed reaction is tRNA(Leu) + L-leucine + ATP = L-leucyl-tRNA(Leu) + AMP + diphosphate. This is Leucine--tRNA ligase from Pyrococcus horikoshii (strain ATCC 700860 / DSM 12428 / JCM 9974 / NBRC 100139 / OT-3).